The primary structure comprises 927 residues: Band 3 anion transport protein (927 aa).

Met-1 bears the N-acetylmethionine mark. Residues 1 to 420 are Cytoplasmic-facing; the sequence is MGDMQDHEKV…LSDITDALSP (420 aa). The residue at position 18 (Ser-18) is a Phosphoserine. Phosphotyrosine occurs at positions 31 and 56. The globular stretch occupies residues 69 to 303; that stretch reads SQVYVELQEL…LGRAAATLMT (235 aa). The interval 190 to 199 is interaction with ANK1; the sequence is AVLTRSGAPS. A phosphoserine mark is found at Ser-199 and Ser-222. The interval 317–370 is dimerization arm; the sequence is RGELLSSLDSFLDCSLVLPPTEAPSEKALLNLVPVQKELLRKRYLPRPAKPDPN. The interval 367–390 is disordered; the sequence is PDPNLYEALDGGKEGPGDEDDPLR. Phosphotyrosine is present on Tyr-372. Residues 421-444 form a helical membrane-spanning segment; that stretch reads QVLAAVIFIYFAALSPAVTFGGLL. Residues 445-452 lie on the Extracellular side of the membrane; that stretch reads GEKTRNLM. A helical transmembrane segment spans residues 453 to 473; sequence GVSELLISTAVQGILFALLGA. The Cytoplasmic segment spans residues 474–476; that stretch reads QPL. The chain crosses the membrane as a discontinuously helical span at residues 477 to 493; sequence LVLGFSGPLLVFEEAFY. Residues 494–502 lie on the Extracellular side of the membrane; it reads SFCESNNLE. A helical membrane pass occupies residues 503 to 523; that stretch reads YIVGRAWIGFWLILLVVLVVA. Topologically, residues 524–535 are cytoplasmic; sequence FEGSFLVQYISR. The chain crosses the membrane as a helical span at residues 536–558; sequence YTQEIFSFLISLIFIYETFSKLI. Over 559-586 the chain is Extracellular; it reads KIFQDYPLQESYAPVVMKPKPQGPVPNT. Residues 587–607 form a helical membrane-spanning segment; it reads ALLSLVLMVGTFLLAMMLRKF. The Cytoplasmic portion of the chain corresponds to 608 to 618; the sequence is KNSTYFPGKLR. The chain crosses the membrane as a helical span at residues 619-639; that stretch reads RVIGDFGVPISILIMVLVDTF. Topologically, residues 640-679 are extracellular; sequence IKNTYTQKLSVPDGLKVSNSSARGWVIHPLGLYNHFPKWM. An N-linked (GlcNAc...) asparagine glycan is attached at Asn-658. Residues 680–700 form a helical membrane-spanning segment; sequence MFASVLPALLVFILIFLESQI. The Cytoplasmic segment spans residues 701 to 716; that stretch reads TTLIVSKPERKMIKGS. A helical transmembrane segment spans residues 717–735; that stretch reads GFHLDLLLVVGMGGVAALF. A discontinuously helical membrane pass occupies residues 736-753; that stretch reads GMPWLSATTVRSVTHANA. Over 754 to 776 the chain is Cytoplasmic; the sequence is LTVMGKASGPGAAAQIQEVKEQR. Helical transmembrane passes span 777–797 and 798–816; these read ISGL…PILS and RIPL…ITSL. Residues 817–854 lie on the Cytoplasmic side of the membrane; it reads SGIQLFDRILLLFKPPKYHPDVPFVKRVKTWRMHLFTG. The segment at residues 855 to 885 is an intramembrane region (discontinuously helical); that stretch reads IQIICLAVLWVVKSTPASLALPFVLILTVPL. Cys-859 is lipidated: S-palmitoyl cysteine. Residues 886 to 927 are Cytoplasmic-facing; it reads RRLLLPLIFRELELQCLDGDDAKVTFDEAEGLDEYDEVPMPV. Tyr-920 is subject to Phosphotyrosine.

This sequence belongs to the anion exchanger (TC 2.A.31) family. A dimer in solution, but in its membrane environment, it exists primarily as a mixture of dimers and tetramers and spans the membrane asymmetrically. Component of the ankyrin-1 complex in the erythrocyte, composed of ANK1, RHCE, RHAG, SLC4A1, EPB42, GYPA, GYPB and AQP1. Interacts with STOM; this interaction positively regulates SLC4A1 activity. Interacts with GYPA; a GYPA monomer is bound at each end of the SLC4A1 dimer forming a heterotetramer. Three SLC4A1 dimers (Band 3-I, Band 3-II and Band 3-III) participates in the ankyrin-1 complex. Interacts (via the cytoplasmic domain) with EPB42; this interaction is mediated by the SLC4A1 Band 3-I dimer. Interacts (via the cytoplasmic domain) directly with ANK1; this interaction is mediated by the SLC4A1 Band 3-II and Band 3-III dimers. In terms of assembly, interacts with TMEM139. As to expression, kidney.

The protein resides in the cell membrane. The protein localises to the basolateral cell membrane. It carries out the reaction hydrogencarbonate(in) + chloride(out) = hydrogencarbonate(out) + chloride(in). Its function is as follows. Functions both as a transporter that mediates electroneutral anion exchange across the cell membrane and as a structural protein. Component of the ankyrin-1 complex of the erythrocyte membrane; required for normal flexibility and stability of the erythrocyte membrane and for normal erythrocyte shape via the interactions of its cytoplasmic domain with cytoskeletal proteins, glycolytic enzymes, and hemoglobin. Functions as a transporter that mediates the 1:1 exchange of inorganic anions across the erythrocyte membrane. Mediates chloride-bicarbonate exchange in the kidney, and is required for normal acidification of the urine. The protein is Band 3 anion transport protein of Rattus norvegicus (Rat).